Here is a 407-residue protein sequence, read N- to C-terminus: Vancomycin aglycone glucosyltransferase (407 aa).

This sequence belongs to the glycosyltransferase 28 family.

It carries out the reaction vancomycin aglycone + UDP-alpha-D-glucose = devancoaminyl-vancomycin + UDP. Its pathway is antibiotic biosynthesis; vancomycin biosynthesis. Its function is as follows. Glucosyltransferase that transfers glucose to the 4-OH-Phegly(4) residue of vancomycin aglycone (AGV) to produce devancoaminyl-vancomycin (DVV) in the biosynthesis of glycopeptide antibiotic chloroeremomycin, a member of the vancomycin group of antibiotics. The chain is Vancomycin aglycone glucosyltransferase (gtfB) from Amycolatopsis orientalis (Nocardia orientalis).